Here is a 353-residue protein sequence, read N- to C-terminus: Rhodopsin (353 aa).

Topologically, residues 1-36 are extracellular; it reads MNGTEGPYFYIPMVNTTGIVRSPYEYPQYYLVNPAA. Asn-2 and Asn-15 each carry an N-linked (GlcNAc...) asparagine glycan. A helical transmembrane segment spans residues 37–61; the sequence is YAALGAYMFLLILLGFPINFLTLYV. The Cytoplasmic segment spans residues 62–73; the sequence is TIEHKKLRTPLN. Residues 74-96 form a helical membrane-spanning segment; it reads YILLNLAVANLFMVFGGFTTTMY. The Extracellular segment spans residues 97-110; the sequence is TSMHGYFVLGRLGC. Cysteines 110 and 187 form a disulfide. A helical membrane pass occupies residues 111–133; sequence NLEGFFATLGGEIALWSLVVLAV. Residues 134–136 carry the 'Ionic lock' involved in activated form stabilization motif; it reads ERW. The Cytoplasmic portion of the chain corresponds to 134-152; it reads ERWMVVCKPISNFRFGENH. A helical membrane pass occupies residues 153 to 173; that stretch reads AIMGLAFTWVMASACAVPPLV. The Extracellular segment spans residues 174–202; it reads GWSRYIPEGMQCSCGIDYYTRAEGFNNES. Residue Asn-200 is glycosylated (N-linked (GlcNAc...) asparagine). A helical membrane pass occupies residues 203-224; that stretch reads FVIYMFVCHFLIPLVVVFFCYG. Residues 225-252 are Cytoplasmic-facing; the sequence is RLLCAVKEAAAAQQESETTQRAEREVSR. The helical transmembrane segment at 253–274 threads the bilayer; that stretch reads MVVIMVVAFLICWCPYAGVAWY. Over 275–286 the chain is Extracellular; it reads IFTHQGSEFGPL. The helical transmembrane segment at 287-308 threads the bilayer; sequence FMTFPAFFAKSSSIYNPMIYIC. Position 296 is an N6-(retinylidene)lysine (Lys-296). At 309–353 the chain is on the cytoplasmic side; that stretch reads MNKQFRHCMITTLCCGKNPFEEEEGASTTSKTEASSVSSSSVSPA. Residues Cys-322 and Cys-323 are each lipidated (S-palmitoyl cysteine). A disordered region spans residues 330–353; it reads EEEGASTTSKTEASSVSSSSVSPA. Residues 334 to 353 show a composition bias toward low complexity; the sequence is ASTTSKTEASSVSSSSVSPA.

This sequence belongs to the G-protein coupled receptor 1 family. Opsin subfamily. Phosphorylated on some or all of the serine and threonine residues present in the C-terminal region. In terms of processing, contains one covalently linked retinal chromophore.

Its subcellular location is the membrane. The protein resides in the cell projection. It localises to the cilium. It is found in the photoreceptor outer segment. Photoreceptor required for image-forming vision at low light intensity. While most salt water fish species use retinal as chromophore, most freshwater fish use 3-dehydroretinal, or a mixture of retinal and 3-dehydroretinal. Light-induced isomerization of 11-cis to all-trans retinal triggers a conformational change that activates signaling via G-proteins. Subsequent receptor phosphorylation mediates displacement of the bound G-protein alpha subunit by arrestin and terminates signaling. This Mugil cephalus (Flathead mullet) protein is Rhodopsin (rho).